We begin with the raw amino-acid sequence, 1397 residues long: DNA-directed RNA polymerase subunit beta' (1397 aa).

Zn(2+)-binding residues include Cys75, Cys77, Cys90, and Cys93. Mg(2+)-binding residues include Asp465, Asp467, and Asp469. Zn(2+)-binding residues include Cys819, Cys893, Cys900, and Cys903.

Belongs to the RNA polymerase beta' chain family. As to quaternary structure, the RNAP catalytic core consists of 2 alpha, 1 beta, 1 beta' and 1 omega subunit. When a sigma factor is associated with the core the holoenzyme is formed, which can initiate transcription. It depends on Mg(2+) as a cofactor. The cofactor is Zn(2+).

It catalyses the reaction RNA(n) + a ribonucleoside 5'-triphosphate = RNA(n+1) + diphosphate. DNA-dependent RNA polymerase catalyzes the transcription of DNA into RNA using the four ribonucleoside triphosphates as substrates. The polypeptide is DNA-directed RNA polymerase subunit beta' (Acinetobacter baumannii (strain ACICU)).